Reading from the N-terminus, the 500-residue chain is Lysine--tRNA ligase (500 aa).

Mg(2+) is bound by residues Glu-410 and Glu-417.

The protein belongs to the class-II aminoacyl-tRNA synthetase family. Homodimer. It depends on Mg(2+) as a cofactor.

It localises to the cytoplasm. It catalyses the reaction tRNA(Lys) + L-lysine + ATP = L-lysyl-tRNA(Lys) + AMP + diphosphate. This is Lysine--tRNA ligase from Pseudomonas fluorescens (strain ATCC BAA-477 / NRRL B-23932 / Pf-5).